The sequence spans 454 residues: Trichosetin biosynthesis cluster transcription factor TF22 (454 aa).

Residues 13–47 constitute a DNA-binding region (zn(2)-C6 fungal-type); sequence CDRCRSHKLKCTVSPEDSRSGPHKCTRCIRAQVTC. Residues 51–89 form a disordered region; it reads PRSQSKRTPNGKNKPEKPKPELEPPQKTSPPVCSSSLAG. A compositionally biased stretch (polar residues) spans 52-61; sequence RSQSKRTPNG. Positions 63 to 74 are enriched in basic and acidic residues; it reads NKPEKPKPELEP.

It is found in the nucleus. Its function is as follows. Transcription factor that regulates the expression of the gene cluster that mediates the biosynthesis of trichosetin, a trans-fused decalin-containing tetramic acid with antimicrobial activity. Directly activates expression of only the three biosynthetic genes PKS-NRPS1, DA and ER, while TF23 and MFS-T are induced by the final product trichosetin and not by TF22. This is Trichosetin biosynthesis cluster transcription factor TF22 from Gibberella fujikuroi (strain CBS 195.34 / IMI 58289 / NRRL A-6831) (Bakanae and foot rot disease fungus).